Reading from the N-terminus, the 52-residue chain is Defensin-like protein 2B (52 aa).

Cystine bridges form between C4/C52, C16/C37, C22/C46, and C26/C48.

In terms of assembly, forms oligomers in its native state.

Its function is as follows. Possesses antifungal activity sensitive to inorganic cations. This is Defensin-like protein 2B from Sinapis alba (White mustard).